We begin with the raw amino-acid sequence, 302 residues long: Sulfate adenylyltransferase subunit 2 (302 aa).

The interval 280–302 (RQGRAIDHDQSGSMELKKRQGYF) is disordered.

It belongs to the PAPS reductase family. CysD subfamily. As to quaternary structure, heterodimer composed of CysD, the smaller subunit, and CysN.

It carries out the reaction sulfate + ATP + H(+) = adenosine 5'-phosphosulfate + diphosphate. Its pathway is sulfur metabolism; hydrogen sulfide biosynthesis; sulfite from sulfate: step 1/3. In terms of biological role, with CysN forms the ATP sulfurylase (ATPS) that catalyzes the adenylation of sulfate producing adenosine 5'-phosphosulfate (APS) and diphosphate, the first enzymatic step in sulfur assimilation pathway. APS synthesis involves the formation of a high-energy phosphoric-sulfuric acid anhydride bond driven by GTP hydrolysis by CysN coupled to ATP hydrolysis by CysD. In Vibrio vulnificus (strain CMCP6), this protein is Sulfate adenylyltransferase subunit 2.